We begin with the raw amino-acid sequence, 314 residues long: MRALFYKDGKLFTDNNFLNPVSDDNPAYEVLQHVKIPTHLTDVVVYEQTWEEALTRLIFVGSDSKGRRQYFYGKMHIQNRNAKRDRIFVRVYNVMKRINCFINKNIKKSSTDSNYQLAVFMLMETMFFIRFGKMKYLKENETVGLLTLKNKHIEISPDEIVIKFVGKDKVSHEFVVHKSNRLYKPLLKLTDDSSPEEFLFNKLSERKVYECIKQFGIRIKDLRTYGVNYTFLYNFWTNVKSVSPLPSPKKLIALTIKQTAEVVGHTPSISKRAYMATTILEMVKDKNFLDVVSKTTFDEFLSIVVDHVKSSTDG.

Positions Ile-77–Gly-314 constitute a Topo IB-type catalytic domain. Residue Tyr-274 is the O-(3'-phospho-DNA)-tyrosine intermediate of the active site.

The protein belongs to the type IB topoisomerase family.

It is found in the virion. It carries out the reaction ATP-independent breakage of single-stranded DNA, followed by passage and rejoining.. In terms of biological role, releases the supercoiling and torsional tension of DNA introduced during the DNA replication and transcription by transiently cleaving and rejoining one strand of the DNA duplex. Introduces a single-strand break via transesterification at the specific target site 5'-[CT]CCTTp site in duplex DNA. The scissile phosphodiester is attacked by the catalytic tyrosine of the enzyme, resulting in the formation of a DNA-(3'-phosphotyrosyl)-enzyme intermediate and the expulsion of a 5'-OH DNA strand. The free DNA strand then undergoes passage around the unbroken strand thus removing DNA supercoils. Finally, in the religation step, the DNA 5'-OH attacks the covalent intermediate to expel the active-site tyrosine and restore the DNA phosphodiester backbone. The chain is DNA topoisomerase I (OPG111) from Cynomys gunnisoni (Gunnison's prairie dog).